Reading from the N-terminus, the 277-residue chain is Intercellular adhesion molecule 2 (277 aa).

An N-terminal signal peptide occupies residues 1 to 22 (MSSFACWSLSLLILFYSPGSGE). At 23–222 (KAFEVYIWSE…EVYEPMQDNQ (200 aa)) the chain is on the extracellular side. 2 Ig-like C2-type domains span residues 39-98 (TESW…CSGK) and 127-196 (GEDF…LDLR). Asn-45, Asn-82, Asn-158, Asn-176, and Asn-186 each carry an N-linked (GlcNAc...) asparagine glycan. 3 cysteine pairs are disulfide-bonded: Cys-46–Cys-91, Cys-50–Cys-95, and Cys-134–Cys-189. The helical transmembrane segment at 223–247 (MVIIIVVVSILLFLFVTSVLLCFIF) threads the bilayer. Residues 248 to 277 (GQHWHRRRTGTYGVLAAWRRLPRAFRARPV) are Cytoplasmic-facing. Residues 250-277 (HWHRRRTGTYGVLAAWRRLPRAFRARPV) are required for interaction with EZR, MSN and RDX and co-localization to microvilli.

Belongs to the immunoglobulin superfamily. ICAM family. In terms of assembly, interacts with RDX, EZR and MSN. As to expression, expressed in endothelial cells and leukocytes. High levels found in lung.

The protein localises to the membrane. It localises to the cell projection. The protein resides in the microvillus. In terms of biological role, ICAM proteins are ligands for the leukocyte adhesion protein LFA-1 (integrin alpha-L/beta-2). ICAM2 may play a role in lymphocyte recirculation by blocking LFA-1-dependent cell adhesion. It mediates adhesive interactions important for antigen-specific immune response, NK-cell mediated clearance, lymphocyte recirculation, and other cellular interactions important for immune response and surveillance. The chain is Intercellular adhesion molecule 2 (Icam2) from Mus musculus (Mouse).